The chain runs to 406 residues: MTEEHRLISAESVTEGHPDKVCDQISDAILDDLLVQDPSSHVAVETSAATGVFLVFGEVTSKGYCDVQSKVRETLRNIGYTSSEVGLDADSCGVVVAITEQSAEINQGVARLTGDQETAASREERYEAQGAGDQGVMFGYATDETPTLMPLPIYLAHRLAFRLTEVRKSGEVPHLRPDGKTQVTIEYDDNDKPVRLDTVLISTQHDPEVTQDWLAVELKKHVIDPVLDEVLGSKVPHDNYRQLVNPTGSFILGGPAADAGLTGRKIIVDTYGGAAHHGGGAFSGKDPSKVDRSAAYATRWVAKNIVAAGLAHKVEIQIAYAIGVADPVSVNVETFGTEQGVTRGQIAAAVRKVFDLRPAAIIDELDLKRPIYLKTAAYGHFGRTDVEFPWEKTDKVEELKAAIAAE.

His-17 provides a ligand contact to ATP. Asp-19 lines the Mg(2+) pocket. Glu-45 is a K(+) binding site. L-methionine contacts are provided by Glu-58 and Gln-101. Residues 101-111 (QSAEINQGVAR) form a flexible loop region. Residues 178–180 (DGK), Asp-258, 264–265 (RK), Ala-281, and Lys-285 each bind ATP. An L-methionine-binding site is contributed by Asp-258. Residue Lys-289 coordinates L-methionine.

The protein belongs to the AdoMet synthase family. As to quaternary structure, homotetramer; dimer of dimers. Mg(2+) serves as cofactor. It depends on K(+) as a cofactor.

The protein resides in the cytoplasm. The catalysed reaction is L-methionine + ATP + H2O = S-adenosyl-L-methionine + phosphate + diphosphate. The protein operates within amino-acid biosynthesis; S-adenosyl-L-methionine biosynthesis; S-adenosyl-L-methionine from L-methionine: step 1/1. In terms of biological role, catalyzes the formation of S-adenosylmethionine (AdoMet) from methionine and ATP. The overall synthetic reaction is composed of two sequential steps, AdoMet formation and the subsequent tripolyphosphate hydrolysis which occurs prior to release of AdoMet from the enzyme. This is S-adenosylmethionine synthase from Bifidobacterium longum subsp. infantis (strain ATCC 15697 / DSM 20088 / JCM 1222 / NCTC 11817 / S12).